The following is a 118-amino-acid chain: Small ribosomal subunit protein uS13 (118 aa).

Positions 94–118 are disordered; that stretch reads SLPLRGQRTKTNARTRKGPRKPIRK.

Belongs to the universal ribosomal protein uS13 family. In terms of assembly, part of the 30S ribosomal subunit. Forms a loose heterodimer with protein S19. Forms two bridges to the 50S subunit in the 70S ribosome.

Its function is as follows. Located at the top of the head of the 30S subunit, it contacts several helices of the 16S rRNA. In the 70S ribosome it contacts the 23S rRNA (bridge B1a) and protein L5 of the 50S subunit (bridge B1b), connecting the 2 subunits; these bridges are implicated in subunit movement. Contacts the tRNAs in the A and P-sites. The chain is Small ribosomal subunit protein uS13 from Shewanella sp. (strain W3-18-1).